The sequence spans 338 residues: Lipoate-protein ligase A (338 aa).

The region spanning Pro-29–Val-216 is the BPL/LPL catalytic domain. ATP-binding positions include Arg-71, Gly-76–Phe-79, and Lys-134. Lys-134 is a binding site for (R)-lipoate.

This sequence belongs to the LplA family. Monomer.

It localises to the cytoplasm. The enzyme catalyses L-lysyl-[lipoyl-carrier protein] + (R)-lipoate + ATP = N(6)-[(R)-lipoyl]-L-lysyl-[lipoyl-carrier protein] + AMP + diphosphate + H(+). It participates in protein modification; protein lipoylation via exogenous pathway; protein N(6)-(lipoyl)lysine from lipoate: step 1/2. It functions in the pathway protein modification; protein lipoylation via exogenous pathway; protein N(6)-(lipoyl)lysine from lipoate: step 2/2. Its function is as follows. Catalyzes both the ATP-dependent activation of exogenously supplied lipoate to lipoyl-AMP and the transfer of the activated lipoyl onto the lipoyl domains of lipoate-dependent enzymes. In Escherichia coli (strain K12 / MC4100 / BW2952), this protein is Lipoate-protein ligase A.